The chain runs to 178 residues: Interleukin-10 (178 aa).

The signal sequence occupies residues 1–18 (MPNPVLLYCLVLLAGMGT). Disulfide bonds link C30–C126 and C80–C132. A glycan (N-linked (GlcNAc...) asparagine) is linked at N134.

Belongs to the IL-10 family. As to quaternary structure, homodimer. Interacts with IL10RA and IL10RB.

Its subcellular location is the secreted. Functionally, major immune regulatory cytokine that acts on many cells of the immune system where it has profound anti-inflammatory functions, limiting excessive tissue disruption caused by inflammation. Mechanistically, IL10 binds to its heterotetrameric receptor comprising IL10RA and IL10RB leading to JAK1 and STAT2-mediated phosphorylation of STAT3. In turn, STAT3 translocates to the nucleus where it drives expression of anti-inflammatory mediators. Targets antigen-presenting cells (APCs) such as macrophages and monocytes and inhibits their release of pro-inflammatory cytokines including granulocyte-macrophage colony-stimulating factor /GM-CSF, granulocyte colony-stimulating factor/G-CSF, IL-1 alpha, IL-1 beta, IL-6, IL-8 and TNF-alpha. Also interferes with antigen presentation by reducing the expression of MHC-class II and co-stimulatory molecules, thereby inhibiting their ability to induce T cell activation. In addition, controls the inflammatory response of macrophages by reprogramming essential metabolic pathways including mTOR signaling. The sequence is that of Interleukin-10 (IL10) from Marmota monax (Woodchuck).